A 371-amino-acid chain; its full sequence is Epoxyqueuosine reductase (371 aa).

Asp137 acts as the Proton donor in catalysis. The 4Fe-4S ferredoxin-type domain maps to 179–211; sequence IPLPVDTPVENQCGKCTACISSCPTNAILENGV. [4Fe-4S] cluster-binding residues include Cys191, Cys194, Cys197, Cys201, Cys217, Cys244, Cys247, and Cys251.

Belongs to the QueG family. In terms of assembly, monomer. It depends on cob(II)alamin as a cofactor. [4Fe-4S] cluster serves as cofactor.

The protein localises to the cytoplasm. The enzyme catalyses epoxyqueuosine(34) in tRNA + AH2 = queuosine(34) in tRNA + A + H2O. It participates in tRNA modification; tRNA-queuosine biosynthesis. Functionally, catalyzes the conversion of epoxyqueuosine (oQ) to queuosine (Q), which is a hypermodified base found in the wobble positions of tRNA(Asp), tRNA(Asn), tRNA(His) and tRNA(Tyr). This is Epoxyqueuosine reductase from Aliivibrio fischeri (strain ATCC 700601 / ES114) (Vibrio fischeri).